Reading from the N-terminus, the 421-residue chain is 3-isopropylmalate dehydratase large subunit (421 aa).

Residues cysteine 302, cysteine 362, and cysteine 365 each contribute to the [4Fe-4S] cluster site.

Belongs to the aconitase/IPM isomerase family. LeuC type 2 subfamily. Heterodimer of LeuC and LeuD. Requires [4Fe-4S] cluster as cofactor.

It carries out the reaction (2R,3S)-3-isopropylmalate = (2S)-2-isopropylmalate. Its pathway is amino-acid biosynthesis; L-leucine biosynthesis; L-leucine from 3-methyl-2-oxobutanoate: step 2/4. Functionally, catalyzes the isomerization between 2-isopropylmalate and 3-isopropylmalate, via the formation of 2-isopropylmaleate. The polypeptide is 3-isopropylmalate dehydratase large subunit (Campylobacter fetus subsp. fetus (strain 82-40)).